Here is a 306-residue protein sequence, read N- to C-terminus: Mitochondrial uncoupling protein 1 (306 aa).

Solcar repeat units lie at residues 9–102 (LSLP…VKNL), 112–203 (VPLS…VKET), and 212–296 (DNVV…AKKY). 6 helical membrane-spanning segments follow: residues 15 to 35 (FACS…LDTA), 71 to 91 (LRSL…FGGL), 118 to 138 (ILAG…TDLV), 177 to 197 (TGLG…LASY), 218 to 238 (ILSG…VDVV), and 269 to 289 (YKGF…MFLT).

The protein belongs to the mitochondrial carrier (TC 2.A.29) family. As to expression, widely expressed.

The protein localises to the mitochondrion inner membrane. PUMPS are mitochondrial transporter proteins that create proton leaks across the inner mitochondrial membrane, thus uncoupling oxidative phosphorylation. This leads to a decrease in the efficiency of oxidative phosphorylation and an increase in heat production. Is involved in protecting plant cells against oxidative stress damage and maintaining the redox balance of the mitochondrial electron transport chain to facilitate photosynthetic metabolism. May play a regulatory role during photorespiration. The sequence is that of Mitochondrial uncoupling protein 1 (PUMP1) from Arabidopsis thaliana (Mouse-ear cress).